Reading from the N-terminus, the 476-residue chain is Aspartyl/glutamyl-tRNA(Asn/Gln) amidotransferase subunit B (476 aa).

It belongs to the GatB/GatE family. GatB subfamily. As to quaternary structure, heterotrimer of A, B and C subunits.

It carries out the reaction L-glutamyl-tRNA(Gln) + L-glutamine + ATP + H2O = L-glutaminyl-tRNA(Gln) + L-glutamate + ADP + phosphate + H(+). The catalysed reaction is L-aspartyl-tRNA(Asn) + L-glutamine + ATP + H2O = L-asparaginyl-tRNA(Asn) + L-glutamate + ADP + phosphate + 2 H(+). Its function is as follows. Allows the formation of correctly charged Asn-tRNA(Asn) or Gln-tRNA(Gln) through the transamidation of misacylated Asp-tRNA(Asn) or Glu-tRNA(Gln) in organisms which lack either or both of asparaginyl-tRNA or glutaminyl-tRNA synthetases. The reaction takes place in the presence of glutamine and ATP through an activated phospho-Asp-tRNA(Asn) or phospho-Glu-tRNA(Gln). The polypeptide is Aspartyl/glutamyl-tRNA(Asn/Gln) amidotransferase subunit B (Clostridium botulinum (strain Kyoto / Type A2)).